The primary structure comprises 584 residues: Membrane frizzled-related protein (584 aa).

The Cytoplasmic portion of the chain corresponds to 1 to 69 (MKDYDDVILR…QPDCHFSWFC (69 aa)). The chain crosses the membrane as a helical; Signal-anchor for type II membrane protein span at residues 70 to 90 (ILLLSGLLLLLLGLLVAVILA). Topologically, residues 91 to 584 (QLQATSLPRT…AASLEACSQP (494 aa)) are extracellular. Residues 108-140 (RGLTPMGVIPSTTPNTTTTTTTTTPARTGQQEA) form a disordered region. The segment covering 119–132 (TTPNTTTTTTTTTP) has biased composition (low complexity). 2 cysteine pairs are disulfide-bonded: Cys150–Cys176 and Cys203–Cys222. Residues 150 to 259 (CGGLLPGPSG…SGFQAWYQAV (110 aa)) form the CUB 1 domain. N-linked (GlcNAc...) asparagine glycosylation is present at Asn233. Residues 265–301 (SCAHNEFHCDLLLCLKRDSVCDGITECADGSDEANCS) enclose the LDL-receptor class A 1 domain. 5 cysteine pairs are disulfide-bonded: Cys266–Cys278, Cys273–Cys291, Cys285–Cys300, Cys307–Cys333, and Cys360–Cys383. The 114-residue stretch at 307-420 (CGGNLTGLYG…GGFLATYQAI (114 aa)) folds into the CUB 2 domain. A glycan (N-linked (GlcNAc...) asparagine) is linked at Asn421. The region spanning 426–460 (GCPWAEFCQSGGYRDLQWMCDLWKDCANDSNDNCS) is the LDL-receptor class A 2 domain. 7 disulfide bridges follow: Cys433-Cys451, Cys445-Cys459, Cys471-Cys533, Cys479-Cys526, Cys517-Cys554, Cys543-Cys581, and Cys547-Cys569. Asn458 carries an N-linked (GlcNAc...) asparagine glycan. The FZ domain occupies 466–584 (QPDLTCEPVQ…AASLEACSQP (119 aa)).

Interacts with C1QTNF5. In terms of tissue distribution, expressed in retinal pigment epithelium and ciliary epithelium of the eye.

It localises to the apical cell membrane. Functionally, may play a role in eye development. The chain is Membrane frizzled-related protein (Mfrp) from Mus musculus (Mouse).